We begin with the raw amino-acid sequence, 722 residues long: Ras and EF-hand domain-containing protein (722 aa).

EF-hand domains lie at 5–39 (DELS…ELKV) and 39–74 (VSPS…ARGL). A compositionally biased stretch (basic and acidic residues) spans 75–84 (HMPEGKKDVE). The interval 75-109 (HMPEGKKDVEQGEPPKSPSTPDKEEKPEETSSPAW) is disordered. Residues 156–335 (REIRLQSTEM…ANRKLHDSND (180 aa)) adopt a coiled-coil conformation. A compositionally biased stretch (polar residues) spans 355 to 374 (INTSPGSTISRNSPKLTRCT). Disordered stretches follow at residues 355–384 (INTS…PRSS) and 439–491 (FHRS…SGAS). Low complexity predominate over residues 480–491 (SNPVSRSSSGAS). GTP-binding positions include 532-537 (AVGKSS), 635-638 (NKAD), and 672-673 (AK).

It belongs to the small GTPase superfamily. Rab family. As to quaternary structure, homodimer.

The protein resides in the cytoplasm. Its subcellular location is the perinuclear region. Its function is as follows. Binds predominantly GDP, and also GTP. The chain is Ras and EF-hand domain-containing protein (rasef) from Xenopus tropicalis (Western clawed frog).